A 207-amino-acid chain; its full sequence is HTH-type transcriptional regulator AqdR (207 aa).

The HTH tetR-type domain occupies 16–76 (ARFRERVLDA…DALLTRTQAE (61 aa)). The segment at residues 39–58 (GFADVARKAGVNGVSLYRRW) is a DNA-binding region (H-T-H motif).

May regulate the expression of genes involved in the degradation of the Pseudomonas aeruginosa quorum sensing signal molecules HHQ (2-heptyl-4-quinolone) and PQS (2-heptyl-3-hydroxy-4-quinolone). The polypeptide is HTH-type transcriptional regulator AqdR (Rhodococcus erythropolis (Arthrobacter picolinophilus)).